Here is a 192-residue protein sequence, read N- to C-terminus: Crossover junction endodeoxyribonuclease RuvC (192 aa).

Catalysis depends on residues D20, E80, and D153. Positions 20, 80, and 153 each coordinate Mg(2+).

Belongs to the RuvC family. As to quaternary structure, homodimer which binds Holliday junction (HJ) DNA. The HJ becomes 2-fold symmetrical on binding to RuvC with unstacked arms; it has a different conformation from HJ DNA in complex with RuvA. In the full resolvosome a probable DNA-RuvA(4)-RuvB(12)-RuvC(2) complex forms which resolves the HJ. It depends on Mg(2+) as a cofactor.

Its subcellular location is the cytoplasm. It catalyses the reaction Endonucleolytic cleavage at a junction such as a reciprocal single-stranded crossover between two homologous DNA duplexes (Holliday junction).. Its function is as follows. The RuvA-RuvB-RuvC complex processes Holliday junction (HJ) DNA during genetic recombination and DNA repair. Endonuclease that resolves HJ intermediates. Cleaves cruciform DNA by making single-stranded nicks across the HJ at symmetrical positions within the homologous arms, yielding a 5'-phosphate and a 3'-hydroxyl group; requires a central core of homology in the junction. The consensus cleavage sequence is 5'-(A/T)TT(C/G)-3'. Cleavage occurs on the 3'-side of the TT dinucleotide at the point of strand exchange. HJ branch migration catalyzed by RuvA-RuvB allows RuvC to scan DNA until it finds its consensus sequence, where it cleaves and resolves the cruciform DNA. This is Crossover junction endodeoxyribonuclease RuvC from Christiangramia forsetii (strain DSM 17595 / CGMCC 1.15422 / KT0803) (Gramella forsetii).